A 209-amino-acid polypeptide reads, in one-letter code: Ubiquitin-conjugating enzyme E2 S (209 aa).

The UBC core domain occupies Q14–Q160. C98 (glycyl thioester intermediate) is an active-site residue. The disordered stretch occupies residues C164–L209. Residues D171–L199 show a composition bias toward basic and acidic residues. A compositionally biased stretch (basic residues) spans K200–L209.

It belongs to the ubiquitin-conjugating enzyme family.

It carries out the reaction S-ubiquitinyl-[E1 ubiquitin-activating enzyme]-L-cysteine + [E2 ubiquitin-conjugating enzyme]-L-cysteine = [E1 ubiquitin-activating enzyme]-L-cysteine + S-ubiquitinyl-[E2 ubiquitin-conjugating enzyme]-L-cysteine.. Its pathway is protein modification; protein ubiquitination. In terms of biological role, catalyzes the covalent attachment of ubiquitin to other proteins. Acts as an essential factor of the anaphase promoting complex/cyclosome (APC/C), a cell cycle-regulated ubiquitin ligase that controls progression through mitosis. Acts by specifically elongating polyubiquitin chains initiated by the E2 enzyme vih/UbcH10 on APC/C substrates, enhancing the degradation of APC/C substrates by the proteasome and promoting mitotic exit. The protein is Ubiquitin-conjugating enzyme E2 S of Drosophila ananassae (Fruit fly).